Consider the following 38-residue polypeptide: Photosystem II reaction center protein L (38 aa).

A helical membrane pass occupies residues 17–37 (SLYWGLLLIFVLAVLFSSYFF).

This sequence belongs to the PsbL family. In terms of assembly, PSII is composed of 1 copy each of membrane proteins PsbA, PsbB, PsbC, PsbD, PsbE, PsbF, PsbH, PsbI, PsbJ, PsbK, PsbL, PsbM, PsbT, PsbX, PsbY, PsbZ, Psb30/Ycf12, at least 3 peripheral proteins of the oxygen-evolving complex and a large number of cofactors. It forms dimeric complexes.

Its subcellular location is the plastid. It localises to the chloroplast thylakoid membrane. In terms of biological role, one of the components of the core complex of photosystem II (PSII). PSII is a light-driven water:plastoquinone oxidoreductase that uses light energy to abstract electrons from H(2)O, generating O(2) and a proton gradient subsequently used for ATP formation. It consists of a core antenna complex that captures photons, and an electron transfer chain that converts photonic excitation into a charge separation. This subunit is found at the monomer-monomer interface and is required for correct PSII assembly and/or dimerization. The sequence is that of Photosystem II reaction center protein L from Ephedra sinica (Chinese ephedra).